The primary structure comprises 336 residues: COP9 signalosome complex subunit 5 (336 aa).

The MPN domain occupies 44 to 181; the sequence is VRISSVAMIK…IGAFRTIPEG (138 aa). Residues His127, His129, and Asp140 each coordinate Zn(2+). Residues 127-140 carry the JAMM motif motif; that stretch reads HSHPGYGCWLSGID.

The protein belongs to the peptidase M67A family. CSN5 subfamily. In terms of assembly, component of the COP9 signalosome (CSN) complex.

The protein resides in the cytoplasm. Its subcellular location is the nucleus. Functionally, catalytic component of the COP9 signalosome (CSN) complex that acts as an regulator of the ubiquitin (Ubl) conjugation pathway by mediating the deneddylation of the cullin subunit of SCF-type E3 ubiquitin-protein ligase complexes. The CSN complex is involved in the regulation of the circadian clock through its control of the stability of the SCF(FWD-1) complex. The polypeptide is COP9 signalosome complex subunit 5 (csn-5) (Neurospora crassa (strain ATCC 24698 / 74-OR23-1A / CBS 708.71 / DSM 1257 / FGSC 987)).